The primary structure comprises 413 residues: High zinc activated nuclear receptor protein (413 aa).

The nuclear receptor DNA-binding region spans 11-86 (LGNCKICLQR…EGMKIELVQL (76 aa)). NR C4-type zinc fingers lie at residues 14–34 (CKICLQRADGIHFAVSSCRAC) and 50–69 (CKEKGNCTVEKSLRNLCRSC). Positions 101–412 (SIDPLFTPNV…TSQCIVHTKN (312 aa)) are required for zinc-binding. The 262-residue stretch at 135–396 (QMTSGYAMFL…VCCKNFKEDA (262 aa)) folds into the NR LBD domain.

It belongs to the nuclear hormone receptor family. Weakly expressed in intestinal cells in the absence of zinc supplementation. Upon zinc supplementation, accumulates in alimentary tract cells, and it is mainly expressed in the intestine.

It is found in the nucleus. It localises to the cytoplasm. In terms of biological role, nuclear receptor transcription factor that binds to DNA enhancer elements to promote the transcription of genes required to maintain micronutrient homeostasis. Direct binding to its ligand zinc allows for nuclear accumulation and activation, which thereby induces the transcription of genes required to promote the storage and detoxification of excess dietary zinc. This in turn, allows for internal zinc levels to be detected and regulated. This is High zinc activated nuclear receptor protein from Caenorhabditis elegans.